Here is a 157-residue protein sequence, read N- to C-terminus: Phosphopantetheine adenylyltransferase (157 aa).

S8 lines the substrate pocket. ATP is bound by residues 8–9 and H16; that span reads SF. Substrate contacts are provided by K40, L72, and R86. ATP contacts are provided by residues 87–89, E97, and 121–127; these read GLR and FGTISSS.

It belongs to the bacterial CoaD family. In terms of assembly, homohexamer. Mg(2+) serves as cofactor.

It is found in the cytoplasm. The enzyme catalyses (R)-4'-phosphopantetheine + ATP + H(+) = 3'-dephospho-CoA + diphosphate. It functions in the pathway cofactor biosynthesis; coenzyme A biosynthesis; CoA from (R)-pantothenate: step 4/5. Reversibly transfers an adenylyl group from ATP to 4'-phosphopantetheine, yielding dephospho-CoA (dPCoA) and pyrophosphate. This chain is Phosphopantetheine adenylyltransferase, found in Cutibacterium acnes (strain DSM 16379 / KPA171202) (Propionibacterium acnes).